A 187-amino-acid polypeptide reads, in one-letter code: Decorin-binding protein B (187 aa).

The N-terminal stretch at 1–20 (MKIGKLNSIVMVLFFDLLVA) is a signal peptide.

This sequence belongs to the decorin-binding protein family.

Functionally, binds to decorin which may mediate the adherence of B.burgdorferi to collagen fibers in skin and other tissues. The protein is Decorin-binding protein B (dbpB) of Borreliella burgdorferi (strain N40) (Borrelia burgdorferi).